A 75-amino-acid chain; its full sequence is RNA-binding protein KhpA (75 aa).

The KH domain occupies 29–75; that stretch reads SIIIELKVAPEDMGKVIGKQGRIAQAIRTLVKAAALKEKKRVIVEII.

It belongs to the KhpA RNA-binding protein family. Forms a complex with KhpB.

Its subcellular location is the cytoplasm. In terms of biological role, a probable RNA chaperone. Forms a complex with KhpB which binds to cellular RNA and controls its expression. Plays a role in peptidoglycan (PG) homeostasis and cell length regulation. In Caldanaerobacter subterraneus subsp. tengcongensis (strain DSM 15242 / JCM 11007 / NBRC 100824 / MB4) (Thermoanaerobacter tengcongensis), this protein is RNA-binding protein KhpA.